A 237-amino-acid chain; its full sequence is Ribonuclease PH (237 aa).

Phosphate-binding positions include Arg86 and 124 to 126; that span reads GTR.

Belongs to the RNase PH family. In terms of assembly, homohexameric ring arranged as a trimer of dimers.

The enzyme catalyses tRNA(n+1) + phosphate = tRNA(n) + a ribonucleoside 5'-diphosphate. Phosphorolytic 3'-5' exoribonuclease that plays an important role in tRNA 3'-end maturation. Removes nucleotide residues following the 3'-CCA terminus of tRNAs; can also add nucleotides to the ends of RNA molecules by using nucleoside diphosphates as substrates, but this may not be physiologically important. Probably plays a role in initiation of 16S rRNA degradation (leading to ribosome degradation) during starvation. The polypeptide is Ribonuclease PH (Bradyrhizobium sp. (strain ORS 278)).